Reading from the N-terminus, the 694-residue chain is Lamina-associated polypeptide 2, isoform alpha (694 aa).

An LEM-like domain is found at 5 to 48 (LEDPSVLTKDKLKSELVANNVTLPAGEQRKDVYVQLYLQHLTAR). 2 disordered regions span residues 47 to 117 (ARNR…ELTN) and 150 to 209 (REQG…FSEL). Residues 49–108 (NRPPLPAGTNSKGPPDFSSDEEREPTPVLGSGAAAAGRSRAAVGRKATKKTDKPRQEDKD) are linker. Position 57 is a phosphothreonine (T57). A phosphoserine mark is found at S59, S66, and S67. T74 is modified (phosphothreonine). The span at 78-93 (GSGAAAAGRSRAAVGR) shows a compositional bias: low complexity. A Phosphoserine modification is found at S79. Omega-N-methylarginine occurs at positions 86 and 88. Over residues 97–106 (KKTDKPRQED) the composition is skewed to basic and acidic residues. The span at 107–117 (KDDLDVTELTN) shows a compositional bias: acidic residues. One can recognise an LEM domain in the interval 109–153 (DLDVTELTNEDLLDQLVKYGVNPGPIVGTTRKLYEKKLLKLREQG). Position 154 is a phosphothreonine (T154). The segment covering 155-178 (ESRSSTPLPTISSSAENTRQNGSN) has biased composition (polar residues). Phosphoserine occurs at positions 156 and 159. 2 positions are modified to phosphothreonine: T160 and T164. A phosphoserine mark is found at S166 and S168. Residues 179-191 (DSDRYSDNEEGKK) show a composition bias toward basic and acidic residues. The Nuclear localization signal signature appears at 190–196 (KKKEHKK). S272, S312, S351, S354, S370, and S424 each carry phosphoserine. The disordered stretch occupies residues 338 to 368 (QPLCPERSHISDQSPLSSKRKALEESESSQL). A coiled-coil region spans residues 558–657 (TESCNQQLDL…VGRRYLWLKD (100 aa)). Position 656 is an N6-acetyllysine (K656).

This sequence belongs to the LEM family. In terms of assembly, interacts with LMNA, BANF1 and RB1 and with chromosomes. Associates directly or indirectly with lamins at specific cell-cycle stages. Interacts with CMTM6. In terms of processing, phosphorylated in a mitose-specific manner. In terms of tissue distribution, expressed in many tissues. Most abundant in adult thymus and fetal liver.

Its subcellular location is the nucleus. It is found in the chromosome. Functionally, may be involved in the structural organization of the nucleus and in the post-mitotic nuclear assembly. Plays an important role, together with LMNA, in the nuclear anchorage of RB1. TP and TP5 may play a role in T-cell development and function. TP5 is an immunomodulating pentapeptide. This chain is Lamina-associated polypeptide 2, isoform alpha (TMPO), found in Homo sapiens (Human).